Consider the following 1037-residue polypeptide: Glycine dehydrogenase (decarboxylating) A, mitochondrial (1037 aa).

The transit peptide at 1-66 (MERARRLANK…LNGFGSQVRT (66 aa)) directs the protein to the mitochondrion. Lys773 bears the N6-(pyridoxal phosphate)lysine mark.

This sequence belongs to the GcvP family. Homodimer. The glycine cleavage system is composed of four proteins: P, T, L and H. Pyridoxal 5'-phosphate is required as a cofactor. In terms of tissue distribution, expressed in leaves, stems and roots.

Its subcellular location is the mitochondrion. It carries out the reaction N(6)-[(R)-lipoyl]-L-lysyl-[glycine-cleavage complex H protein] + glycine + H(+) = N(6)-[(R)-S(8)-aminomethyldihydrolipoyl]-L-lysyl-[glycine-cleavage complex H protein] + CO2. Its function is as follows. The glycine cleavage system catalyzes the degradation of glycine. The P protein binds the alpha-amino group of glycine through its pyridoxal phosphate cofactor; CO(2) is released and the remaining methylamine moiety is then transferred to the lipoamide cofactor of the H protein. The polypeptide is Glycine dehydrogenase (decarboxylating) A, mitochondrial (GDCSPA) (Flaveria pringlei).